A 434-amino-acid polypeptide reads, in one-letter code: Probable exopolygalacturonase A (434 aa).

An N-terminal signal peptide occupies residues 1 to 19; the sequence is MKLPILVTLFITLPALCVS. 5 N-linked (GlcNAc...) asparagine glycosylation sites follow: Asn46, Asn57, Asn106, Asn199, and Asn207. A PbH1 1 repeat occupies 232 to 253; that stretch reads SSNIVIQDSRIVNTDDCVSFKP. Catalysis depends on Asp246, which acts as the Proton donor. Cys248 and Cys265 are disulfide-bonded. N-linked (GlcNAc...) asparagine glycosylation is present at Asn254. The stretch at 255–275 is one PbH1 2 repeat; it reads STQIVIQNLDCTGSHGISVGS. His269 is an active-site residue. N-linked (GlcNAc...) asparagine glycans are attached at residues Asn293, Asn329, and Asn354. Cys392 and Cys398 are disulfide-bonded. N-linked (GlcNAc...) asparagine glycosylation is present at Asn400.

It belongs to the glycosyl hydrolase 28 family.

The protein resides in the secreted. It carries out the reaction [(1-&gt;4)-alpha-D-galacturonosyl](n) + H2O = alpha-D-galacturonate + [(1-&gt;4)-alpha-D-galacturonosyl](n-1). Its function is as follows. Specific in hydrolyzing the terminal glycosidic bond of polygalacturonic acid and oligogalacturonates. The sequence is that of Probable exopolygalacturonase A (pgxA) from Aspergillus niger (strain ATCC MYA-4892 / CBS 513.88 / FGSC A1513).